The primary structure comprises 227 residues: Cytochrome c oxidase subunit 2 (227 aa).

Residues 1–14 are Mitochondrial intermembrane-facing; that stretch reads MAYPFQLGLQDATS. A helical membrane pass occupies residues 15 to 45; the sequence is PIMEELTNFHDHTLMIVFLISSLVLYIISLM. Topologically, residues 46–59 are mitochondrial matrix; that stretch reads LTTKLTHTSTMDAQ. Residues 60-87 form a helical membrane-spanning segment; sequence EVETIWTILPAVILILIALPSLRILYMM. Over 88–227 the chain is Mitochondrial intermembrane; that stretch reads DEINNPALTV…YFENWSASMI (140 aa). Positions 161, 196, 198, 200, 204, and 207 each coordinate Cu cation. Mg(2+) is bound at residue Glu198. Tyr218 is subject to Phosphotyrosine.

It belongs to the cytochrome c oxidase subunit 2 family. In terms of assembly, component of the cytochrome c oxidase (complex IV, CIV), a multisubunit enzyme composed of 14 subunits. The complex is composed of a catalytic core of 3 subunits MT-CO1, MT-CO2 and MT-CO3, encoded in the mitochondrial DNA, and 11 supernumerary subunits COX4I, COX5A, COX5B, COX6A, COX6B, COX6C, COX7A, COX7B, COX7C, COX8 and NDUFA4, which are encoded in the nuclear genome. The complex exists as a monomer or a dimer and forms supercomplexes (SCs) in the inner mitochondrial membrane with NADH-ubiquinone oxidoreductase (complex I, CI) and ubiquinol-cytochrome c oxidoreductase (cytochrome b-c1 complex, complex III, CIII), resulting in different assemblies (supercomplex SCI(1)III(2)IV(1) and megacomplex MCI(2)III(2)IV(2)). Found in a complex with TMEM177, COA6, COX18, COX20, SCO1 and SCO2. Interacts with TMEM177 in a COX20-dependent manner. Interacts with COX20. Interacts with COX16. The cofactor is Cu cation.

It is found in the mitochondrion inner membrane. It catalyses the reaction 4 Fe(II)-[cytochrome c] + O2 + 8 H(+)(in) = 4 Fe(III)-[cytochrome c] + 2 H2O + 4 H(+)(out). Functionally, component of the cytochrome c oxidase, the last enzyme in the mitochondrial electron transport chain which drives oxidative phosphorylation. The respiratory chain contains 3 multisubunit complexes succinate dehydrogenase (complex II, CII), ubiquinol-cytochrome c oxidoreductase (cytochrome b-c1 complex, complex III, CIII) and cytochrome c oxidase (complex IV, CIV), that cooperate to transfer electrons derived from NADH and succinate to molecular oxygen, creating an electrochemical gradient over the inner membrane that drives transmembrane transport and the ATP synthase. Cytochrome c oxidase is the component of the respiratory chain that catalyzes the reduction of oxygen to water. Electrons originating from reduced cytochrome c in the intermembrane space (IMS) are transferred via the dinuclear copper A center (CU(A)) of subunit 2 and heme A of subunit 1 to the active site in subunit 1, a binuclear center (BNC) formed by heme A3 and copper B (CU(B)). The BNC reduces molecular oxygen to 2 water molecules using 4 electrons from cytochrome c in the IMS and 4 protons from the mitochondrial matrix. The polypeptide is Cytochrome c oxidase subunit 2 (MT-CO2) (Oenomys hypoxanthus (Rufous-nosed rat)).